The sequence spans 372 residues: MHC class I-like protein MILL2 (372 aa).

Positions 1–26 (MEASSGTAGPAVLLLILALLLTESQG) are cleaved as a signal peptide. The tract at residues 28–119 (RSQGTHTLRY…MINQKGHDKG (92 aa)) is alpha-1. Intrachain disulfides connect Cys78/Cys89, Cys129/Cys191, and Cys230/Cys287. Positions 120–210 (PYTLQATLDC…SLSNVLPDTG (91 aa)) are alpha-2. 3 N-linked (GlcNAc...) asparagine glycosylation sites follow: Asn134, Asn234, and Asn293. The Ig-like C1-type domain maps to 192 to 302 (PARLQRHLAS…NRTIMQTAVS (111 aa)). The alpha-3 stretch occupies residues 211–339 (SPVVIVTCRN…VVDGGLVTGN (129 aa)). The tract at residues 308–349 (WPSASWATRQEAEGPHRTHNDHVVDGGLVTGNANKDSPDASS) is disordered. Basic and acidic residues predominate over residues 317–331 (QEAEGPHRTHNDHVV). A connecting peptide region spans residues 340–348 (ANKDSPDAS). Residue Ser349 is the site of GPI-anchor amidated serine attachment. Residues 350 to 372 (CATASAISAFPVVVLSVALPRAN) constitute a propeptide, removed in mature form.

Belongs to the MHC class I family. In terms of assembly, heterodimer with B2M. As to expression, ubiquitously expressed in neonatal and adult tissues.

Its subcellular location is the cell membrane. In terms of biological role, binds to heparan sulfate proteoglycans on the surface of fibroblast cells. This chain is MHC class I-like protein MILL2, found in Rattus norvegicus (Rat).